The following is a 544-amino-acid chain: ATP synthase subunit alpha (544 aa).

173 to 180 (GDRQTGKT) is an ATP binding site. The interval 513-544 (GSDGQIIGGGEPESDGEDVDVEQEQIVRQKRG) is disordered. The span at 524-535 (PESDGEDVDVEQ) shows a compositional bias: acidic residues.

The protein belongs to the ATPase alpha/beta chains family. In terms of assembly, F-type ATPases have 2 components, CF(1) - the catalytic core - and CF(0) - the membrane proton channel. CF(1) has five subunits: alpha(3), beta(3), gamma(1), delta(1), epsilon(1). CF(0) has three main subunits: a(1), b(2) and c(9-12). The alpha and beta chains form an alternating ring which encloses part of the gamma chain. CF(1) is attached to CF(0) by a central stalk formed by the gamma and epsilon chains, while a peripheral stalk is formed by the delta and b chains.

It is found in the cell membrane. It catalyses the reaction ATP + H2O + 4 H(+)(in) = ADP + phosphate + 5 H(+)(out). Its function is as follows. Produces ATP from ADP in the presence of a proton gradient across the membrane. The alpha chain is a regulatory subunit. This chain is ATP synthase subunit alpha, found in Beutenbergia cavernae (strain ATCC BAA-8 / DSM 12333 / CCUG 43141 / JCM 11478 / NBRC 16432 / NCIMB 13614 / HKI 0122).